A 320-amino-acid polypeptide reads, in one-letter code: MYSLEEFNNQAINADFQRNNMFSCVFATTPSTKSSSLISSISNFSYNNLGLNSDWLGLTQGDINQGITTLITAGTQKLIRKSGVSKYLIGAMSQRTVQSLLGSFTVGTYLIDFFNMAYNSSGLMIYSVKMPENRLSYETDWNYNSPNIRITGRELDPLVISFRMDSEACNYRAMQDWVNSVQDPVTGLRALPQDVEADIQVNLHSRNGLPHTAVMFTMHSISVSAPELSYDGDNQITTFDVTFAYRVMQAGAVDRQRALEWLESAAINGIQSVLGNSGGVTGLSNSLSRLSRLGGTAGSISNINTMTGIVNSQSKILGAI.

Homohexamer. The tube second annulus is composed of a gp54 hexameric ring. Interacts with the tail tube protein gp19. Interacts with the first layer of sheath proteins gp18. Part of the baseplate macromolecular complex which consists of gp5, gp5.4, gp27 (central spike complex); gp6, gp25, gp53 (inner baseplate); gp7, gp8 (intermediate baseplate); gp9, gp10, gp11, gp12 (peripheral); gp48 and gp54 (proximal region of the tail tube).

Its subcellular location is the virion. In terms of biological role, baseplate protein that forms, together with gp48, the baseplate-tail tube junction. The tail tube first 2 annuli are formed by gp48 and gp54, which are in continuation of the spike complex. Involved in the tail assembly. Morphogenesis of the baseplate is completed by association of gp48 and gp54, which bind the upper part of the baseplate dome to form the platform for polymerization of the tail tube. This is Baseplate tail-tube junction protein gp54 (54) from Escherichia coli (Bacteriophage T4).